We begin with the raw amino-acid sequence, 1116 residues long: Probable chitinase LysM11 (1116 aa).

One can recognise a LysM domain in the interval 233-283; sequence GTYTIQTNDNCAEIAAHFGVTQDDIYDLNEDTWGWAGCGTNDLKADQVICL. Positions 346 to 719 constitute a GH18 domain; it reads FYHVAYFEVF…LGVDPDSDEA (374 aa). Glutamate 466 functions as the Proton donor in the catalytic mechanism. Chitin contacts are provided by tyrosine 467 and tryptophan 701.

Belongs to the glycosyl hydrolase 18 family. Chitinase class V subfamily.

The enzyme catalyses Random endo-hydrolysis of N-acetyl-beta-D-glucosaminide (1-&gt;4)-beta-linkages in chitin and chitodextrins.. Probable chitinase involved in the degradation of chitin, a component of the cell walls of fungi and exoskeletal elements of some animals (including worms and arthropods). Might be involved in manipulation of host defenses for successful infection. This is Probable chitinase LysM11 from Penicillium expansum (Blue mold rot fungus).